Consider the following 137-residue polypeptide: NADH-quinone oxidoreductase subunit A (137 aa).

3 helical membrane passes run 12 to 32, 66 to 86, and 95 to 115; these read WGFA…LGLS, FYLV…LFAW, and WTGF…LVYL.

Belongs to the complex I subunit 3 family. NDH-1 is composed of 13 different subunits. Subunits NuoA, H, J, K, L, M, N constitute the membrane sector of the complex.

It localises to the cell inner membrane. It catalyses the reaction a quinone + NADH + 5 H(+)(in) = a quinol + NAD(+) + 4 H(+)(out). Its function is as follows. NDH-1 shuttles electrons from NADH, via FMN and iron-sulfur (Fe-S) centers, to quinones in the respiratory chain. The immediate electron acceptor for the enzyme in this species is believed to be ubiquinone. Couples the redox reaction to proton translocation (for every two electrons transferred, four hydrogen ions are translocated across the cytoplasmic membrane), and thus conserves the redox energy in a proton gradient. This is NADH-quinone oxidoreductase subunit A from Pseudomonas putida (strain ATCC 700007 / DSM 6899 / JCM 31910 / BCRC 17059 / LMG 24140 / F1).